The primary structure comprises 597 residues: Probable bifunctional ADP-ribose hydrolase/ADP-ribosyltransferase (597 aa).

The Macro domain occupies 99–299 (SRLIKHGDLG…FYSKLLGPSH (201 aa)). ADP-D-ribose is bound by residues Asp118, Ile119, and Asn133. Zn(2+)-binding residues include Cys139, His144, and Cys146. The ADP-D-ribose site is built by Cys146, Ile147, Asp148, Ser244, Thr245, Gly246, and Phe248. A Deacetylase sirtuin-type domain is found at 307–597 (ENTPQGSLSL…IGRAIPLLLE (291 aa)). NAD(+) contacts are provided by residues Ala333, 418–421 (SNAD), and Gln438. Zn(2+) contacts are provided by Cys446, Cys450, Cys485, and Cys488. Val584 provides a ligand contact to NAD(+).

It in the N-terminal section; belongs to the MacroD-type family. Zn-Macro subfamily. This sequence in the C-terminal section; belongs to the sirtuin family. Class M subfamily. In terms of assembly, monomer. Zn(2+) serves as cofactor.

It catalyses the reaction 5-O-(ADP-D-ribosyl)-L-glutamyl-[protein] + H2O = L-glutamyl-[protein] + ADP-D-ribose + H(+). Its function is as follows. Is probably a bifunctional enzyme with ADP-ribosyltransferase and ADP-ribosylhydrolase activities. In vitro, can act as an ADP-ribosylhydrolase that hydrolyzes ADP-ribosyl-glutamate bonds. It can remove the ADP-ribosyl modification from the human mono-ADP-ribosylated PARP1 E988Q mutant, which is primarily modified on glutamate site with only minor aspartate contribution. It cannot hydrolyze the ADP-ribosyl-arpartate bond in ribosylated S.pyogenes GcvH-L. The sequence is that of Probable bifunctional ADP-ribose hydrolase/ADP-ribosyltransferase from Fusarium oxysporum f. sp. cubense.